A 180-amino-acid polypeptide reads, in one-letter code: Large ribosomal subunit protein uL6 (180 aa).

This sequence belongs to the universal ribosomal protein uL6 family. Part of the 50S ribosomal subunit.

Its function is as follows. This protein binds to the 23S rRNA, and is important in its secondary structure. It is located near the subunit interface in the base of the L7/L12 stalk, and near the tRNA binding site of the peptidyltransferase center. This Mesoplasma florum (strain ATCC 33453 / NBRC 100688 / NCTC 11704 / L1) (Acholeplasma florum) protein is Large ribosomal subunit protein uL6.